A 152-amino-acid polypeptide reads, in one-letter code: Large ribosomal subunit protein bL9 (152 aa).

Belongs to the bacterial ribosomal protein bL9 family.

Its function is as follows. Binds to the 23S rRNA. In Prochlorococcus marinus (strain NATL1A), this protein is Large ribosomal subunit protein bL9.